We begin with the raw amino-acid sequence, 226 residues long: uncharacterized protein (226 aa).

A Response regulatory domain is found at 1 to 112 (MLVEDDHSIS…ELTARVKAAI (112 aa)). A 4-aspartylphosphate modification is found at Asp-48. Residues 126 to 225 (NKVIRIHQLA…LWGIGYKLGE (100 aa)) constitute a DNA-binding region (ompR/PhoB-type).

Post-translationally, phosphorylated by YcbM.

It is found in the cytoplasm. In terms of biological role, member of the two-component regulatory system YcbM/YcbL. This is an uncharacterized protein from Bacillus subtilis (strain 168).